Consider the following 648-residue polypeptide: Bifunctional protein TilS/HprT (648 aa).

An ATP-binding site is contributed by 29-34; the sequence is SGGPDS. Asp627 contributes to the Mg(2+) binding site.

This sequence in the N-terminal section; belongs to the tRNA(Ile)-lysidine synthase family. In the C-terminal section; belongs to the purine/pyrimidine phosphoribosyltransferase family. Mg(2+) is required as a cofactor.

The protein resides in the cytoplasm. It carries out the reaction IMP + diphosphate = hypoxanthine + 5-phospho-alpha-D-ribose 1-diphosphate. The enzyme catalyses GMP + diphosphate = guanine + 5-phospho-alpha-D-ribose 1-diphosphate. The catalysed reaction is cytidine(34) in tRNA(Ile2) + L-lysine + ATP = lysidine(34) in tRNA(Ile2) + AMP + diphosphate + H(+). In terms of biological role, ligates lysine onto the cytidine present at position 34 of the AUA codon-specific tRNA(Ile) that contains the anticodon CAU, in an ATP-dependent manner. Cytidine is converted to lysidine, thus changing the amino acid specificity of the tRNA from methionine to isoleucine. The polypeptide is Bifunctional protein TilS/HprT (tilS/hprT) (Listeria monocytogenes serotype 4b (strain F2365)).